The chain runs to 459 residues: tRNA uridine(34) acetyltransferase (459 aa).

A radical S-adenosyl-L-methionine (rSAM) region spans residues 1-278; it reads MKKLSRTISG…VPPYVRISRV (278 aa). Positions 6–271 constitute a Radical SAM core domain; that stretch reads RTISGVTPVA…IADIKALVPP (266 aa). [4Fe-4S] cluster is bound by residues cysteine 23, cysteine 27, and cysteine 30. Lysine 77 serves as a coordination point for acetyl-CoA. The segment at 308-459 is N-acetyltransferase; that stretch reads QKCRCIRCRE…VAGYMCKHLD (152 aa). Zn(2+)-binding residues include cysteine 310, cysteine 312, and cysteine 315. Residues 386–389, 409–411, and tyrosine 442 each bind acetyl-CoA; these read ELHV and LGR.

It belongs to the ELP3 family. Homodimer. The cofactor is [4Fe-4S] cluster.

The enzyme catalyses uridine(34) in tRNA + acetyl-CoA + S-adenosyl-L-methionine + H2O = 5-(carboxymethyl)uridine(34) in tRNA + 5'-deoxyadenosine + L-methionine + CoA + 2 H(+). The protein operates within tRNA modification. In terms of biological role, tRNA uridine(34) acetyltransferase, which mediates formation of carboxymethyluridine in the wobble base at position 34 in tRNAs. The proposed mechanism is the following: (i) recruits S-adenosyl-L-methionine and cleaves it to generate a 5'-deoxyadenosine radical (5'-dA) in the radical S-adenosyl-L-methionine (rSAM) region, (ii) hydrolyzes acetyl-CoA in the N-acetyltransferase domain and (iii) an acetyl radical is formed by the products of the two domains and (iv) is transferred onto the C5 position of uridine(34) in the bound tRNA molecule. Does not show protein lysine acetyltransferase activity. This chain is tRNA uridine(34) acetyltransferase, found in Dehalococcoides mccartyi (strain CBDB1).